A 309-amino-acid polypeptide reads, in one-letter code: Serpentine receptor class gamma-47 (309 aa).

The next 5 membrane-spanning stretches (helical) occupy residues 22–42 (IVQM…LFLF), 140–160 (FKLY…VLPL), 190–210 (IYSS…IFYI), 230–250 (LITL…ILMA), and 272–292 (ISSD…DVGI).

The protein belongs to the nematode receptor-like protein srg family.

The protein resides in the membrane. This chain is Serpentine receptor class gamma-47 (srg-47), found in Caenorhabditis elegans.